A 132-amino-acid chain; its full sequence is Small ribosomal subunit protein uS8 (132 aa).

Belongs to the universal ribosomal protein uS8 family. In terms of assembly, part of the 30S ribosomal subunit. Contacts proteins S5 and S12.

Functionally, one of the primary rRNA binding proteins, it binds directly to 16S rRNA central domain where it helps coordinate assembly of the platform of the 30S subunit. The chain is Small ribosomal subunit protein uS8 from Geobacillus kaustophilus (strain HTA426).